The primary structure comprises 160 residues: Transcription antitermination protein NusB (160 aa).

It belongs to the NusB family.

In terms of biological role, involved in transcription antitermination. Required for transcription of ribosomal RNA (rRNA) genes. Binds specifically to the boxA antiterminator sequence of the ribosomal RNA (rrn) operons. This is Transcription antitermination protein NusB from Gluconobacter oxydans (strain 621H) (Gluconobacter suboxydans).